A 756-amino-acid chain; its full sequence is Inhibitor of nuclear factor kappa-B kinase subunit beta (756 aa).

The Protein kinase domain occupies 15-300 (WEMKERLGTG…DPVYGPNGCF (286 aa)). Residues 21-29 (LGTGGFGNV) and Lys-44 each bind ATP. Catalysis depends on Asp-145, which acts as the Proton acceptor. A Glycyl lysine isopeptide (Lys-Gly) (interchain with G-Cter in ubiquitin) cross-link involves residue Lys-163. Ser-177 carries the post-translational modification Phosphoserine; by TBK1 and PKC/PRKCZ. Cys-179 is modified (S-nitrosocysteine). Phosphoserine; by TBK1, PKC/PRKCZ and PDPK1 is present on Ser-181. At Pro-191 the chain carries Hydroxyproline. Positions 458–479 (LLRNNSCLSKMKNSMASMSQQL) are leucine-zipper. 9 positions are modified to phosphoserine; by autocatalysis: Ser-670, Ser-672, Ser-675, Ser-682, Ser-689, Ser-697, Ser-705, Ser-733, and Ser-740. The tract at residues 737 to 742 (LDWSWL) is NEMO-binding.

The protein belongs to the protein kinase superfamily. Ser/Thr protein kinase family. I-kappa-B kinase subfamily. In terms of assembly, component of the I-kappa-B-kinase (IKK) core complex consisting of CHUK, IKBKB and IKBKG; probably four alpha/CHUK-beta/IKBKB dimers are associated with four gamma/IKBKG subunits. The IKK core complex seems to associate with regulatory or adapter proteins to form a IKK-signalosome holo-complex. The IKK complex associates with TERF2IP/RAP1, leading to promote IKK-mediated phosphorylation of RELA/p65. Part of a complex composed of NCOA2, NCOA3, CHUK/IKKA, IKBKB, IKBKG and CREBBP. Part of a 70-90 kDa complex at least consisting of CHUK/IKKA, IKBKB, NFKBIA, RELA, ELP1 and MAP3K14. Found in a membrane raft complex, at least composed of BCL10, CARD11, DPP4 and IKBKB. Interacts with SQSTM1 through PRKCZ or PRKCI. Forms an NGF-induced complex with IKBKB, PRKCI and TRAF6. May interact with MAVS/IPS1. Interacts with NALP2. Interacts with TICAM1. Interacts with FAF1; the interaction disrupts the IKK complex formation. Interacts with ATM. Part of a ternary complex consisting of TANK, IKBKB and IKBKG. Interacts with NIBP; the interaction is direct. Interacts with ARRB1 and ARRB2. Interacts with TRIM21. Interacts with NLRC5; prevents IKBKB phosphorylation and kinase activity. Interacts with PDPK1. Interacts with EIF2AK2/PKR. The phosphorylated form interacts with PPM1A and PPM1B. Interacts with ZNF268; the interaction is further increased in a TNF-alpha-dependent manner. Interacts with IKBKE. Interacts with ZC3H12A. Interacts with AKAP13. Interacts with IFIT5; the interaction synergizes the recruitment of IKK to MAP3K7 and enhances IKK phosphorylation. Interacts with LRRC14; disrupts IKBKB-IKBKG interaction preventing I-kappa-B-kinase (IKK) core complex formation and leading to a decrease of IKBKB phosphorylation and NF-kappaB activation. Interacts with SASH1. Interacts with ARFIP2. Interacts with FKBP5. Upon cytokine stimulation, phosphorylated on Ser-177 and Ser-181 by MEKK1 and/or MAP3K14/NIK as well as TBK1 and PRKCZ; which enhances activity. Phosphorylated by MAP3K7/TAK1 in response to NOD1 and NOD2 signaling, promoting activation and phosphorylation of NF-kappa-B inhibitors, leading to NF-kappa-B activation. Once activated, autophosphorylates on the C-terminal serine cluster; which decreases activity and prevents prolonged activation of the inflammatory response. Phosphorylated by the IKK-related kinases TBK1 and IKBKE, which is associated with reduced CHUK/IKKA and IKBKB activity and NF-kappa-B-dependent gene transcription. Dephosphorylated at Ser-177 and Ser-181 by PPM1A and PPM1B. Post-translationally, ubiquitinated. Monoubiquitination involves TRIM21 that leads to inhibition of Tax-induced NF-kappa-B signaling. 'Ser-163' may not serve as a monoubiquitination site. Ubiquitination on 'Ser-163' may modulate phosphorylation on C-terminal serine residues. In terms of processing, hydroxylated by PHD1/EGLN2, loss of hydroxylation under hypoxic conditions results in activation of NF-kappa-B.

It is found in the cytoplasm. Its subcellular location is the nucleus. The protein localises to the membrane raft. It carries out the reaction L-seryl-[I-kappa-B protein] + ATP = O-phospho-L-seryl-[I-kappa-B protein] + ADP + H(+). The catalysed reaction is L-seryl-[protein] + ATP = O-phospho-L-seryl-[protein] + ADP + H(+). It catalyses the reaction L-threonyl-[protein] + ATP = O-phospho-L-threonyl-[protein] + ADP + H(+). Serine kinase that plays an essential role in the NF-kappa-B signaling pathway which is activated by multiple stimuli such as inflammatory cytokines, bacterial or viral products, DNA damages or other cellular stresses. Acts as a part of the canonical IKK complex in the conventional pathway of NF-kappa-B activation. Phosphorylates inhibitors of NF-kappa-B on 2 critical serine residues. These modifications allow polyubiquitination of the inhibitors and subsequent degradation by the proteasome. In turn, free NF-kappa-B is translocated into the nucleus and activates the transcription of hundreds of genes involved in immune response, growth control, or protection against apoptosis. In addition to the NF-kappa-B inhibitors, phosphorylates several other components of the signaling pathway including NEMO/IKBKG, NF-kappa-B subunits RELA and NFKB1, as well as IKK-related kinases TBK1 and IKBKE. IKK-related kinase phosphorylations may prevent the overproduction of inflammatory mediators since they exert a negative regulation on canonical IKKs. Phosphorylates FOXO3, mediating the TNF-dependent inactivation of this pro-apoptotic transcription factor. Also phosphorylates other substrates including NAA10, NCOA3, BCL10 and IRS1. Phosphorylates RIPK1 at 'Ser-25' which represses its kinase activity and consequently prevents TNF-mediated RIPK1-dependent cell death. Phosphorylates the C-terminus of IRF5, stimulating IRF5 homodimerization and translocation into the nucleus. This Bos taurus (Bovine) protein is Inhibitor of nuclear factor kappa-B kinase subunit beta (IKBKB).